A 283-amino-acid chain; its full sequence is 2-hydroxymuconate semialdehyde hydrolase (283 aa).

One can recognise an AB hydrolase-1 domain in the interval 32 to 262; sequence LMMIHGSGPG…QCGHWTQIEH (231 aa). Residues Ser107, Asp228, and His256 contribute to the active site.

This sequence belongs to the DmpD/TodF/XylF esterase family.

It carries out the reaction (2Z,4E)-2-hydroxy-6-oxohexa-2,4-dienoate + H2O = 2-oxopent-4-enoate + formate + H(+). The protein operates within aromatic compound metabolism; benzoate degradation via hydroxylation. Its function is as follows. Catalyzes the conversion of 2-hydroxymuconate semialdehyde to 2-hydroxypent-2,4-dienoate. This is 2-hydroxymuconate semialdehyde hydrolase (dmpD) from Pseudomonas sp. (strain CF600).